The sequence spans 413 residues: Tyrosine--tRNA ligase (413 aa).

The 'HIGH' region signature appears at 59–68; sequence PTAPDIHLGH. Residues 243 to 247 carry the 'KMSKS' region motif; the sequence is KMSKS. Lysine 246 contributes to the ATP binding site. The S4 RNA-binding domain maps to 351 to 411; it reads LAIGQLLKQA…GKRRFARVTL (61 aa).

The protein belongs to the class-I aminoacyl-tRNA synthetase family. TyrS type 2 subfamily. Homodimer.

The protein localises to the cytoplasm. It carries out the reaction tRNA(Tyr) + L-tyrosine + ATP = L-tyrosyl-tRNA(Tyr) + AMP + diphosphate + H(+). Catalyzes the attachment of tyrosine to tRNA(Tyr) in a two-step reaction: tyrosine is first activated by ATP to form Tyr-AMP and then transferred to the acceptor end of tRNA(Tyr). In Burkholderia pseudomallei (strain K96243), this protein is Tyrosine--tRNA ligase.